An 852-amino-acid polypeptide reads, in one-letter code: Protein Shroom1 (852 aa).

Residue Met1 is modified to N-acetylmethionine. At Ser18 the chain carries Phosphoserine. Disordered regions lie at residues 34 to 54, 81 to 109, and 125 to 218; these read SSFS…GTDL, TSPR…PLNR, and AAQA…ANQQ. Thr103 bears the Phosphothreonine mark. A compositionally biased stretch (low complexity) spans 125 to 144; the sequence is AAQAAEPPSPPASRAAYRQR. 2 positions are modified to phosphoserine: Ser133 and Ser137. The ASD1 domain occupies 145–233; sequence LQGAQRRVLR…SEPGKLDRVG (89 aa). The segment covering 152–164 has biased composition (basic and acidic residues); it reads VLRETSFQRKELR. Phosphoserine occurs at positions 166, 190, and 224. Disordered regions lie at residues 276-320, 399-431, 464-496, and 823-852; these read LPET…GSGG, MRSP…QRTG, SRPT…TAAE, and DLGH…LLLT. Residues 279-289 are compositionally biased toward polar residues; the sequence is TQPQGSMNLDS. Residues 301 to 313 show a composition bias toward low complexity; sequence ASRSRSASGEVLG. The segment covering 465–479 has biased composition (polar residues); it reads RPTSHTPTGTANDNI. The ASD2 domain maps to 543-825; the sequence is EELVQELARL…QLDAIRDDLG (283 aa). Over residues 830–852 the composition is skewed to pro residues; that stretch reads SPSPARPPGTCPPVQPPFPLLLT.

Belongs to the shroom family. Interacts with F-actin.

Its subcellular location is the cytoplasm. It localises to the cytoskeleton. Functionally, may be involved in the assembly of microtubule arrays during cell elongation. The protein is Protein Shroom1 (SHROOM1) of Homo sapiens (Human).